The following is a 420-amino-acid chain: 3-oxoacyl-[acyl-carrier-protein] synthase 2 (420 aa).

The Ketosynthase family 3 (KS3) domain occupies Phe13 to Cys419. Catalysis depends on for beta-ketoacyl synthase activity residues Cys173, His314, and His349.

It belongs to the thiolase-like superfamily. Beta-ketoacyl-ACP synthases family.

The protein resides in the cytoplasm. It carries out the reaction an ultra-long-chain di-unsaturated fatty acyl-[ACP] + malonyl-[ACP] + H(+) = a 3-oxo-ultra-long-chain di-unsaturated fatty acyl-[ACP] + holo-[ACP] + CO2. It functions in the pathway lipid metabolism; mycolic acid biosynthesis. Part of the mycobacterial fatty acid elongation system FAS-II, which is involved in mycolic acid biosynthesis. Catalyzes the elongation of long chain acyl-ACP substrates by the addition of two carbons from malonyl-ACP to an acyl acceptor. Involved in extension of the mycolate chains to full lengths and produces longer chain multiunsaturated hydrocarbons averaging 54 carbons in length. This chain is 3-oxoacyl-[acyl-carrier-protein] synthase 2 (kasB), found in Mycobacterium leprae (strain TN).